We begin with the raw amino-acid sequence, 624 residues long: Dihydroxy-acid dehydratase (624 aa).

Asp81 contributes to the Mg(2+) binding site. Cys122 contacts [2Fe-2S] cluster. Mg(2+) contacts are provided by Asp123 and Lys124. The residue at position 124 (Lys124) is an N6-carboxylysine. Residue Cys195 coordinates [2Fe-2S] cluster. Glu499 contributes to the Mg(2+) binding site. Ser525 (proton acceptor) is an active-site residue.

It belongs to the IlvD/Edd family. In terms of assembly, homodimer. [2Fe-2S] cluster serves as cofactor. It depends on Mg(2+) as a cofactor.

It catalyses the reaction (2R)-2,3-dihydroxy-3-methylbutanoate = 3-methyl-2-oxobutanoate + H2O. The catalysed reaction is (2R,3R)-2,3-dihydroxy-3-methylpentanoate = (S)-3-methyl-2-oxopentanoate + H2O. The protein operates within amino-acid biosynthesis; L-isoleucine biosynthesis; L-isoleucine from 2-oxobutanoate: step 3/4. It functions in the pathway amino-acid biosynthesis; L-valine biosynthesis; L-valine from pyruvate: step 3/4. Its function is as follows. Functions in the biosynthesis of branched-chain amino acids. Catalyzes the dehydration of (2R,3R)-2,3-dihydroxy-3-methylpentanoate (2,3-dihydroxy-3-methylvalerate) into 2-oxo-3-methylpentanoate (2-oxo-3-methylvalerate) and of (2R)-2,3-dihydroxy-3-methylbutanoate (2,3-dihydroxyisovalerate) into 2-oxo-3-methylbutanoate (2-oxoisovalerate), the penultimate precursor to L-isoleucine and L-valine, respectively. The chain is Dihydroxy-acid dehydratase from Shewanella baltica (strain OS155 / ATCC BAA-1091).